Consider the following 419-residue polypeptide: uncharacterized protein (419 aa).

A run of 7 helical transmembrane segments spans residues 16–36 (IMAK…LVVT), 186–206 (LVYI…SMIA), 235–255 (LLGI…AGSL), 283–303 (VIYA…LAAF), 318–338 (ITPM…GLNA), 340–360 (DAGF…IMFL), and 369–389 (FWQA…LAVI).

To M.jannaschii MJ1024.

The protein resides in the cell membrane. This is an uncharacterized protein from Bacillus subtilis (strain 168).